A 273-amino-acid chain; its full sequence is MSLILAIYGKGGIGKSTTSANLSAAMALKGAKVLQIGCDPKHDSTFPLTGHLQPTVIDVLDSVNFHLEDVSKEDVIRTGFAGVDTLESGGPPAGSGCGGYVVGETVKLLKEFGLYDKYDVIVFDVLGDVVCGGFSAPLNYADYGLIIACNDFDSIFAANRLCLAIAQKSQRHKVKLAGIIANRVDYEYGGGTSLLDQFAEKVGTKVIGRVPYHDLIRRSRLAGKTLFEMEGPGKEECTRPFEEMAEYLLAQPQATIPNPYHDRAIFEAIGGWR.

Residues 12–17 (GIGKST) and Lys41 contribute to the ATP site. Ser16 provides a ligand contact to Mg(2+). Positions 97 and 131 each coordinate [4Fe-4S] cluster. 182-183 (NR) lines the ATP pocket.

The protein belongs to the NifH/BchL/ChlL family. In terms of assembly, homodimer. Protochlorophyllide reductase is composed of three subunits; BchL, BchN and BchB. Requires [4Fe-4S] cluster as cofactor.

The enzyme catalyses chlorophyllide a + oxidized 2[4Fe-4S]-[ferredoxin] + 2 ADP + 2 phosphate = protochlorophyllide a + reduced 2[4Fe-4S]-[ferredoxin] + 2 ATP + 2 H2O. Its pathway is porphyrin-containing compound metabolism; bacteriochlorophyll biosynthesis (light-independent). Component of the dark-operative protochlorophyllide reductase (DPOR) that uses Mg-ATP and reduced ferredoxin to reduce ring D of protochlorophyllide (Pchlide) to form chlorophyllide a (Chlide). This reaction is light-independent. The L component serves as a unique electron donor to the NB-component of the complex, and binds Mg-ATP. The chain is Light-independent protochlorophyllide reductase iron-sulfur ATP-binding protein from Chloroflexus aggregans (strain MD-66 / DSM 9485).